We begin with the raw amino-acid sequence, 293 residues long: Probable 2-(5''-triphosphoribosyl)-3'-dephosphocoenzyme-A synthase (293 aa).

It belongs to the CitG/MdcB family.

The enzyme catalyses 3'-dephospho-CoA + ATP = 2'-(5''-triphospho-alpha-D-ribosyl)-3'-dephospho-CoA + adenine. Functionally, involved in the formation of 2-(5''-phosphoribosyl)-3'-dephosphocoenzyme-A, the prosthetic group of the acyl-carrier protein of the malonate decarboxylase. This chain is Probable 2-(5''-triphosphoribosyl)-3'-dephosphocoenzyme-A synthase, found in Pseudomonas aeruginosa (strain ATCC 15692 / DSM 22644 / CIP 104116 / JCM 14847 / LMG 12228 / 1C / PRS 101 / PAO1).